We begin with the raw amino-acid sequence, 425 residues long: Glutamate-1-semialdehyde 2,1-aminomutase (425 aa).

At K264 the chain carries N6-(pyridoxal phosphate)lysine.

This sequence belongs to the class-III pyridoxal-phosphate-dependent aminotransferase family. HemL subfamily. As to quaternary structure, homodimer. It depends on pyridoxal 5'-phosphate as a cofactor.

Its subcellular location is the cytoplasm. It catalyses the reaction (S)-4-amino-5-oxopentanoate = 5-aminolevulinate. It participates in porphyrin-containing compound metabolism; protoporphyrin-IX biosynthesis; 5-aminolevulinate from L-glutamyl-tRNA(Glu): step 2/2. The sequence is that of Glutamate-1-semialdehyde 2,1-aminomutase from Campylobacter lari (strain RM2100 / D67 / ATCC BAA-1060).